A 141-amino-acid chain; its full sequence is Large ribosomal subunit protein uL11 (141 aa).

The protein belongs to the universal ribosomal protein uL11 family. In terms of assembly, part of the ribosomal stalk of the 50S ribosomal subunit. Interacts with L10 and the large rRNA to form the base of the stalk. L10 forms an elongated spine to which L12 dimers bind in a sequential fashion forming a multimeric L10(L12)X complex. One or more lysine residues are methylated.

Its function is as follows. Forms part of the ribosomal stalk which helps the ribosome interact with GTP-bound translation factors. This is Large ribosomal subunit protein uL11 from Aliarcobacter butzleri (strain RM4018) (Arcobacter butzleri).